A 356-amino-acid polypeptide reads, in one-letter code: Cyclin-A1-4 (356 aa).

It belongs to the cyclin family. Cyclin AB subfamily.

This is Cyclin-A1-4 (CYCA1-4) from Oryza sativa subsp. japonica (Rice).